Consider the following 293-residue polypeptide: Ribosomal RNA small subunit methyltransferase A (293 aa).

S-adenosyl-L-methionine is bound by residues N38, V40, G65, E86, D116, and N133.

It belongs to the class I-like SAM-binding methyltransferase superfamily. rRNA adenine N(6)-methyltransferase family. RsmA subfamily.

Its subcellular location is the cytoplasm. It catalyses the reaction adenosine(1518)/adenosine(1519) in 16S rRNA + 4 S-adenosyl-L-methionine = N(6)-dimethyladenosine(1518)/N(6)-dimethyladenosine(1519) in 16S rRNA + 4 S-adenosyl-L-homocysteine + 4 H(+). Specifically dimethylates two adjacent adenosines (A1518 and A1519) in the loop of a conserved hairpin near the 3'-end of 16S rRNA in the 30S particle. May play a critical role in biogenesis of 30S subunits. The polypeptide is Ribosomal RNA small subunit methyltransferase A (Paenarthrobacter aurescens (strain TC1)).